Consider the following 265-residue polypeptide: RWD domain-containing protein 3 (265 aa).

One can recognise an RWD domain in the interval 7-114 (EEVAALSAIY…WTQQNLNNLI (108 aa)).

The protein localises to the nucleus. It is found in the cytoplasm. Functionally, enhancer of SUMO conjugation. Increases SUMO conjugation to proteins by promoting the: binding of E1 and E2 enzymes, thioester linkage between SUMO and ube2i/ubc9 and transfer of SUMO to specific target proteins which include hif1a, pias, nfkbia, nr3c1 and top1. Has no effect on ubiquitination. The sequence is that of RWD domain-containing protein 3 (rwdd3) from Xenopus tropicalis (Western clawed frog).